A 275-amino-acid chain; its full sequence is Putative pyruvate, phosphate dikinase regulatory protein (275 aa).

149 to 156 lines the ADP pocket; that stretch reads GVSRTSKT.

This sequence belongs to the pyruvate, phosphate/water dikinase regulatory protein family. PDRP subfamily.

It catalyses the reaction N(tele)-phospho-L-histidyl/L-threonyl-[pyruvate, phosphate dikinase] + ADP = N(tele)-phospho-L-histidyl/O-phospho-L-threonyl-[pyruvate, phosphate dikinase] + AMP + H(+). The catalysed reaction is N(tele)-phospho-L-histidyl/O-phospho-L-threonyl-[pyruvate, phosphate dikinase] + phosphate + H(+) = N(tele)-phospho-L-histidyl/L-threonyl-[pyruvate, phosphate dikinase] + diphosphate. Bifunctional serine/threonine kinase and phosphorylase involved in the regulation of the pyruvate, phosphate dikinase (PPDK) by catalyzing its phosphorylation/dephosphorylation. The polypeptide is Putative pyruvate, phosphate dikinase regulatory protein (Levilactobacillus brevis (strain ATCC 367 / BCRC 12310 / CIP 105137 / JCM 1170 / LMG 11437 / NCIMB 947 / NCTC 947) (Lactobacillus brevis)).